Here is a 122-residue protein sequence, read N- to C-terminus: Acidic phospholipase A2 (122 aa).

Cystine bridges form between C26/C115, C28/C44, C43/C95, C49/C122, C50/C88, C57/C81, and C75/C86. The Ca(2+) site is built by Y27, G29, and G31. H47 is a catalytic residue. A Ca(2+)-binding site is contributed by D48. Residue D89 is part of the active site.

It belongs to the phospholipase A2 family. Group II subfamily. D49 sub-subfamily. Monomer. Ca(2+) is required as a cofactor. As to expression, expressed by the venom gland.

The protein localises to the secreted. It catalyses the reaction a 1,2-diacyl-sn-glycero-3-phosphocholine + H2O = a 1-acyl-sn-glycero-3-phosphocholine + a fatty acid + H(+). In terms of biological role, PLA2 catalyzes the calcium-dependent hydrolysis of the 2-acyl groups in 3-sn-phosphoglycerides. The polypeptide is Acidic phospholipase A2 (Gloydius blomhoffii (Mamushi)).